Here is a 741-residue protein sequence, read N- to C-terminus: MKLFKNWSDVNNVKQRQLLLAYFRFILKQIVKSWLLWVTAGLVLFLLALVLLIIPAFTKQDPLFLWSHPVVQMSSLIIPFIALFATIITFQVFINGYYNGLEILLITRFFTRGRLFFARLAVLFIWITGTAFLSGLFVSLTATLGATSQTVTDLVLSVFFGVLLLSLLFSCVLIIIAQFLNRTQSMLLLLLGVSLASFTTVILAFSIKPPSENLRDNGYQPLNLSLISKSKSKSVENVFTIIDSSNVSDPRNKKKSIVKTNPQAIWDEYGESSFFQSQYYWNVGYWINSLFRLNSLSDYRNFDVNLYFLNTKLNFDREVDTDKMVDFVSFRDQRHLYFLSYSFFINTHNLPTQPLPRILTYDNNGAFLEKIVPSFDDIKLDPPRVKKVYKFFSDTIIQSFRDYEAEEKERQEKEEKEKAEKDNGNGQDSNKVNSVSTEPNNKNSSDADSKDNNDSSDSQGKDSSKSKPKFRPRLPQFFDRVSINYSKFSSSFNTQLKHIHQGLSTRDEAMEIFKDKVALFYALSMAYDNFTFQKDSGIIDNTSLNKFKTEFNKKQKELTEKNKQKQDGKDQKSQRMTQGADKAVTVEPKAMQSEIGMTDQTNDQSSSETKDSMDSSDSSDTVDNTDESEDKQSEEEEKFDEEIENAKKMPKAEDAFFNTASIWLSSPFLFFENGAKREQRYEIHLLNSNTQVNNEIIKTNSFYYVSGEPIVGQEVIIAMVLVVTLGLLVGSFFAYQKRDIK.

A run of 5 helical transmembrane segments spans residues 34–54 (WLLW…LLII), 76–96 (LIIP…FING), 120–140 (LAVL…FVSL), 156–176 (LSVF…LIII), and 187–207 (LLLL…AFSI). Residues 404-423 (EAEEKERQEKEEKEKAEKDN) show a composition bias toward basic and acidic residues. Disordered regions lie at residues 404 to 473 (EAEE…FRPR) and 555 to 647 (QKEL…ENAK). A compositionally biased stretch (polar residues) spans 424-439 (GNGQDSNKVNSVSTEP). Basic and acidic residues-rich tracts occupy residues 445–465 (SDAD…DSSK) and 555–573 (QKEL…DQKS). The span at 623-643 (DNTDESEDKQSEEEEKFDEEI) shows a compositional bias: acidic residues. 2 helical membrane passes run 655-675 (AFFN…ENGA) and 715-735 (VIIA…FFAY).

This sequence to M.pneumoniae MPN_333.

The protein resides in the cell membrane. This is an uncharacterized protein from Mycoplasma pneumoniae (strain ATCC 29342 / M129 / Subtype 1) (Mycoplasmoides pneumoniae).